Consider the following 190-residue polypeptide: Large ribosomal subunit protein eL15 (190 aa).

Belongs to the eukaryotic ribosomal protein eL15 family.

This is Large ribosomal subunit protein eL15 (rpl15e) from Nanoarchaeum equitans (strain Kin4-M).